The sequence spans 215 residues: Urease accessory protein UreG (215 aa).

Position 15-22 (15-22) interacts with GTP; the sequence is GPVGSGKT.

Belongs to the SIMIBI class G3E GTPase family. UreG subfamily. In terms of assembly, homodimer. UreD, UreF and UreG form a complex that acts as a GTP-hydrolysis-dependent molecular chaperone, activating the urease apoprotein by helping to assemble the nickel containing metallocenter of UreC. The UreE protein probably delivers the nickel.

It localises to the cytoplasm. Facilitates the functional incorporation of the urease nickel metallocenter. This process requires GTP hydrolysis, probably effectuated by UreG. This chain is Urease accessory protein UreG, found in Alcanivorax borkumensis (strain ATCC 700651 / DSM 11573 / NCIMB 13689 / SK2).